The primary structure comprises 600 residues: Estrogen receptor (600 aa).

The interval 1 to 189 (MTMTLHTKAS…IMESAKETRY (189 aa)) is modulating (transactivation AF-1); mediates interaction with MACROD1. An O-linked (GlcNAc) serine glycan is attached at Ser-10. The interval 35–47 (MERALGEVYVDNS) is required for interaction with NCOA1. Residues 35 to 179 (MERALGEVYV…LSSSSEKGNM (145 aa)) form an interaction with DDX5; self-association region. Phosphoserine; by CDK2 is present on residues Ser-109 and Ser-111. Phosphoserine is present on Ser-123. The disordered stretch occupies residues 148 to 177 (DTGPPAFYRSNSDNRRQNGRERLSSSSEKG). Residues 159 to 170 (SDNRRQNGRERL) are compositionally biased toward basic and acidic residues. Phosphoserine; by CK2 is present on Ser-172. 2 NR C4-type zinc fingers span residues 190–210 (CAVC…CEGC) and 226–250 (CPAT…LRKC). Residues 190–255 (CAVCNDYASG…RLRKCYEVGM (66 aa)) constitute a DNA-binding region (nuclear receptor). The tract at residues 190–315 (CAVCNDYASG…TKKNSPALSL (126 aa)) is mediates interaction with DNTTIP2. Residues 256–315 (MKGGIRKDRRGGRMLKHKRQRDDLEGRNEMGTSGDMRAANLWPSPLVIKHTKKNSPALSL) are hinge. Arg-265 carries the post-translational modification Asymmetric dimethylarginine; by PRMT1. An interaction with AKAP13 region spans residues 267-600 (GRMLKHKRQR…PEAEGFPNTI (334 aa)). A self-association region spans residues 269–600 (MLKHKRQRDD…PEAEGFPNTI (332 aa)). Residues 316–552 (TADQMVSALL…DLLLEMLDAH (237 aa)) enclose the NR LBD domain. The segment at 316–600 (TADQMVSALL…PEAEGFPNTI (285 aa)) is transactivation AF-2. The 17beta-estradiol site is built by Glu-358 and Arg-399. Residue Cys-452 is the site of S-palmitoyl cysteine attachment. His-529 is a binding site for 17beta-estradiol. Tyr-542 carries the post-translational modification Phosphotyrosine; by Tyr-kinases. Residues 558-581 (ASRMGVPPEEPSQSQLTTTSSTSA) form a disordered region. Residues 569-581 (SQSQLTTTSSTSA) are compositionally biased toward low complexity. Thr-576 is a glycosylation site (O-linked (GlcNAc) threonine).

Belongs to the nuclear hormone receptor family. NR3 subfamily. Interacts with BCAS3. Binds DNA as a homodimer. Can form a heterodimer with ESR2. Interacts with coactivator NCOA5. Interacts with PELP1, the interaction is enhanced by 17-beta-estradiol; the interaction increases ESR1 transcriptional activity. Interacts with NCOA7; the interaction is ligand-inducible. Interacts with AKAP13, CUEDC2, HEXIM1, KDM5A, MAP1S, SMARD1, and UBE1C. Interacts with MUC1; the interaction is stimulated by 7 beta-estradiol (E2) and enhances ESR1-mediated transcription. Interacts with DNTTIP2, and UIMC1. Interacts with KMT2D/MLL2. Interacts with ATAD2; the interaction is enhanced by estradiol. Interacts with KIF18A and LDB1. Interacts with RLIM (via its C-terminus). Interacts with MACROD1. Interacts with SH2D4A and PLCG. Interacts with SH2D4A; the interaction blocks binding to PLCG and inhibits estrogen-induced cell proliferation. Interacts with DYNLL1. Interacts with CCDC62; the interaction requires estradiol and appears to enhance the transcription of target genes. Interacts with NR2C1; the interaction prevents homodimerization of ESR1 and suppresses its transcriptional activity and cell growth. Interacts with DNAAF4. Interacts with PRMT2. Interacts with RBFOX2. Interacts with EP300; the interaction is estrogen-dependent and enhanced by CITED1. Interacts with CITED1; the interaction is estrogen-dependent. Interacts with FAM120B, FOXL2, PHB2 and SLC30A9. Interacts with coactivators NCOA3 and NCOA6. Interacts with STK3/MST2 only in the presence of SAV1 and vice-versa. Binds to CSNK1D. Interacts with NCOA2; NCOA2 can interact with ESR1 AF-1 and AF-2 domains simultaneously and mediate their transcriptional synergy. Interacts with DDX5. Interacts with NCOA1; the interaction seems to require a self-association of N-terminal and C-terminal regions. Interacts with ZNF366, DDX17, NFKB1, RELA, SP1 and SP3. Interacts with NRIP1. Interacts with GPER1; the interaction occurs in an estrogen-dependent manner. Interacts with TRIP4 (ufmylated); estrogen dependent. Interacts with LMTK3; the interaction phosphorylates ESR1 (in vitro) and protects it against proteasomal degradation. Interacts with CCAR2 (via N-terminus) in a ligand-independent manner. Interacts with ZFHX3. Interacts with SFR1 in a ligand-dependent and -independent manner. Interacts with DCAF13, LATS1 and DCAF1; regulates ESR1 ubiquitination and ubiquitin-mediated proteasomal degradation. Interacts (via DNA-binding domain) with POU4F2 (C-terminus); this interaction increases the estrogen receptor ESR1 transcriptional activity in a DNA- and ligand 17-beta-estradiol-independent manner. Interacts with ESRRB isoform 1. Interacts with UBE3A and WBP2. Interacts with GTF2B. Interacts with RBM39. In the absence of hormonal ligand, interacts with TACC1. Interacts with PI3KR1 or PI3KR2 and PTK2/FAK1. Interacts with SRC. Interacts with BAG1; the interaction is promoted in the absence of estradiol (17-beta-estradiol/E2). Interacts with and ubiquitinated by STUB1; the interaction is promoted in the absence of estradiol (17-beta-estradiol/E2). Interacts with NEDD8. Phosphorylated by cyclin A/CDK2 and CK1. Phosphorylation probably enhances transcriptional activity. Dephosphorylation at Ser-123 by PPP5C inhibits its transactivation activity. Phosphorylated by LMTK3 (in vitro). Post-translationally, ubiquitinated; regulated by LATS1 via DCAF1 it leads to ESR1 proteasomal degradation. Deubiquitinated by OTUB1. Ubiquitinated by STUB1/CHIP; in the CA1 hippocampal region following loss of endogenous circulating estradiol (17-beta-estradiol/E2). Ubiquitinated by UBR5, leading to its degradation: UBR5 specifically recognizes and binds ligand-bound ESR1 when it is not associated with coactivators (NCOAs). In presence of NCOAs, the UBR5-degron is not accessible, preventing its ubiquitination and degradation. In terms of processing, palmitoylated at Cys-452 by ZDHHC7 and ZDHHC21. This modification is required for plasma membrane targeting and for rapid intracellular signaling via ERK and AKT kinases and cAMP generation, but not for signaling mediated by the nuclear hormone receptor. Dimethylated by PRMT1 at Arg-265. The methylation may favor cytoplasmic localization. Demethylated by JMJD6 at Arg-265. Expressed in the CA1 region of the hippocampus, expression decreases with age (at protein level). Expressed in the uterus (at protein level).

The protein localises to the nucleus. It is found in the cytoplasm. The protein resides in the golgi apparatus. Its subcellular location is the cell membrane. In terms of biological role, nuclear hormone receptor. The steroid hormones and their receptors are involved in the regulation of eukaryotic gene expression and affect cellular proliferation and differentiation in target tissues. Ligand-dependent nuclear transactivation involves either direct homodimer binding to a palindromic estrogen response element (ERE) sequence or association with other DNA-binding transcription factors, such as AP-1/c-Jun, c-Fos, ATF-2, Sp1 and Sp3, to mediate ERE-independent signaling. Ligand binding induces a conformational change allowing subsequent or combinatorial association with multiprotein coactivator complexes through LXXLL motifs of their respective components. Mutual transrepression occurs between the estrogen receptor (ER) and NF-kappa-B in a cell-type specific manner. Decreases NF-kappa-B DNA-binding activity and inhibits NF-kappa-B-mediated transcription from the IL6 promoter and displace RELA/p65 and associated coregulators from the promoter. Recruited to the NF-kappa-B response element of the CCL2 and IL8 promoters and can displace CREBBP. Present with NF-kappa-B components RELA/p65 and NFKB1/p50 on ERE sequences. Can also act synergistically with NF-kappa-B to activate transcription involving respective recruitment adjacent response elements; the function involves CREBBP. Can activate the transcriptional activity of TFF1. Also mediates membrane-initiated estrogen signaling involving various kinase cascades. Essential for MTA1-mediated transcriptional regulation of BRCA1 and BCAS3. Maintains neuronal survival in response to ischemic reperfusion injury when in the presence of circulating estradiol (17-beta-estradiol/E2). The sequence is that of Estrogen receptor (Esr1) from Rattus norvegicus (Rat).